We begin with the raw amino-acid sequence, 768 residues long: Tripartite motif-containing protein 67 (768 aa).

Residues Cys7 to Glu42 form an RING-type; degenerate zinc finger. A compositionally biased stretch (low complexity) spans Ala55–Ala70. Disordered stretches follow at residues Ala55 to Gly74 and Gln247 to Pro284. A B box-type 1; degenerate zinc finger spans residues Ala201–Pro248. The span at Gln247–Ala257 shows a compositional bias: pro residues. A B box-type 2 zinc finger spans residues Arg285–Leu327. 4 residues coordinate Zn(2+): Cys290, His293, Cys313, and His319. Residues Lys332–Asn369 are a coiled coil. The COS domain occupies Ile435–Val493. The region spanning Pro498–Val592 is the Fibronectin type-III domain. Positions Asn574–Leu765 constitute a B30.2/SPRY domain.

Its subcellular location is the cytoplasm. It is found in the cytoskeleton. This is Tripartite motif-containing protein 67 (Trim67) from Mus musculus (Mouse).